The chain runs to 447 residues: Coagulation factor VII (447 aa).

The first 23 residues, 1-23 (MLSQAWALALLCFLLSLWGSLPA), serve as a signal peptide directing secretion. Residues 24–40 (VFLPQEQALSILHRPRR) constitute a propeptide that is removed on maturation. The Gla domain maps to 41-85 (ANGFLEELLPGSLERECREELCSFEEAHEIFRNEERTRQFWVSYN). E46, E47, E54, E56, E59, E60, E65, E66, E69, E74, and E75 each carry 4-carboxyglutamate. A disulfide bridge connects residues C57 and C62. In terms of domain architecture, EGF-like 1; calcium-binding spans 86–122 (DGDQCASSPCQNGGSCEDQLRSYICFCPDGFEGRNCE). Cystine bridges form between C90–C101, C95–C110, C112–C121, C131–C142, C138–C152, C154–C167, C175–C302, C199–C204, C218–C234, and C350–C369. A glycan (O-linked (Glc...) serine) is linked at S92. The O-linked (Glc...) serine; alternate glycan is linked to S92. The O-linked (Xyl...) serine; alternate glycan is linked to S92. An O-linked (Fuc) serine glycan is attached at S100. An EGF-like 2 domain is found at 127 to 168 (SQLICANDNGGCEQYCGADPGAGRFCWCHEGYALQADGVSCA). Residue N185 is glycosylated (N-linked (GlcNAc...) asparagine). The Peptidase S1 domain maps to 193–432 (IVGGHVCPKG…YTAWLRQLMG (240 aa)). H233 (charge relay system) is an active-site residue. Residue N243 is glycosylated (N-linked (GlcNAc...) asparagine). Residue D282 is the Charge relay system of the active site. D378 serves as a coordination point for substrate. Cysteines 380 and 408 form a disulfide. The Charge relay system role is filled by S384.

It belongs to the peptidase S1 family. Heterodimer of a light chain and a heavy chain linked by a disulfide bond. The vitamin K-dependent, enzymatic carboxylation of some glutamate residues allows the modified protein to bind calcium. In terms of processing, O-glycosylated. O-fucosylated by POFUT1 on a conserved serine or threonine residue found in the consensus sequence C2-X(4,5)-[S/T]-C3 of EGF domains, where C2 and C3 are the second and third conserved cysteines. Post-translationally, can be either O-glucosylated or O-xylosylated at Ser-92 by POGLUT1. In terms of tissue distribution, plasma.

It is found in the secreted. It catalyses the reaction Selective cleavage of Arg-|-Ile bond in factor X to form factor Xa.. Initiates the extrinsic pathway of blood coagulation. Serine protease that circulates in the blood in a zymogen form. Factor VII is converted to factor VIIa by factor Xa, factor XIIa, factor IXa, or thrombin by minor proteolysis. In the presence of tissue factor and calcium ions, factor VIIa then converts factor X to factor Xa by limited proteolysis. Factor VIIa also converts factor IX to factor IXa in the presence of tissue factor and calcium. This chain is Coagulation factor VII (F7), found in Bos taurus (Bovine).